The following is a 289-amino-acid chain: ATP synthase subunit a (289 aa).

6 helical membrane-spanning segments follow: residues 43–63 (AFHVDTLGWSVALGLIFVLIF), 101–121 (SAVIAPLALTIFVWVFLMNAV), 160–180 (LSVFALIIFYSIKVKGIGGFI), 193–213 (LFVQALLIPVNFLLEFVTLIA), 232–252 (VFILIAVMFGSGLLWLSGLGV), and 259–279 (AVFHILIITLQAFIFMMLTIV).

It belongs to the ATPase A chain family. As to quaternary structure, F-type ATPases have 2 components, CF(1) - the catalytic core - and CF(0) - the membrane proton channel. CF(1) has five subunits: alpha(3), beta(3), gamma(1), delta(1), epsilon(1). CF(0) has three main subunits: a(1), b(2) and c(9-12). The alpha and beta chains form an alternating ring which encloses part of the gamma chain. CF(1) is attached to CF(0) by a central stalk formed by the gamma and epsilon chains, while a peripheral stalk is formed by the delta and b chains.

The protein localises to the cell inner membrane. In terms of biological role, key component of the proton channel; it plays a direct role in the translocation of protons across the membrane. The sequence is that of ATP synthase subunit a from Pseudomonas savastanoi pv. phaseolicola (strain 1448A / Race 6) (Pseudomonas syringae pv. phaseolicola (strain 1448A / Race 6)).